Here is a 332-residue protein sequence, read N- to C-terminus: Heterogeneous nuclear ribonucleoprotein A/B (332 aa).

A disordered region spans residues Met1 to Glu66. Residues Gly29 to Gly49 show a composition bias toward low complexity. 2 RRM domains span residues Gly69–Lys154 and Lys153–Glu233. Ser81 carries the phosphoserine modification. Glycyl lysine isopeptide (Lys-Gly) (interchain with G-Cter in SUMO2) cross-links involve residues Lys130 and Lys203. Lys215 carries the post-translational modification N6-acetyllysine. Positions Tyr235–Trp268 are disordered. Residue Ser242 is modified to Phosphoserine. A Dimethylated arginine; alternate modification is found at Arg245. Arg245 is subject to Omega-N-methylarginine; alternate. An omega-N-methylarginine mark is found at Arg250, Gly251, Arg253, and Gly254. The segment covering Arg253–Gln264 has biased composition (gly residues). Residues Ser255 and Gly256 each carry the phosphoserine modification. An N6-acetyllysine mark is found at Gly271, Tyr272, and Lys318. Residues Gln311–Tyr332 are disordered. Arg322 carries the dimethylated arginine; alternate modification. Arg322 is modified (omega-N-methylarginine; alternate). An Asymmetric dimethylarginine; alternate modification is found at Arg322.

As to quaternary structure, identified in a IGF2BP1-dependent mRNP granule complex containing untranslated mRNAs. Interacts with APOBEC1. In terms of processing, dimethylation at Arg-322 is probably asymmetric. As to expression, ubiquitous.

The protein resides in the nucleus. The protein localises to the cytoplasm. In terms of biological role, binds single-stranded RNA. Has a high affinity for G-rich and U-rich regions of hnRNA. Also binds to APOB mRNA transcripts around the RNA editing site. The polypeptide is Heterogeneous nuclear ribonucleoprotein A/B (HNRNPAB) (Homo sapiens (Human)).